We begin with the raw amino-acid sequence, 421 residues long: Hydrolyase poxO (421 aa).

Residue Ser-239 is the Nucleophile of the active site.

The protein belongs to the AB hydrolase superfamily. FUS2 hydrolase family. As to quaternary structure, homodimer.

The protein operates within secondary metabolite biosynthesis. Functionally, hydrolyase; part of the gene cluster that mediates the biosynthesis of oxaleimides, cytotoxic compounds containing an unusual disubstituted succinimide moiety. The first step of the pathway is provided by the HR-PKS poxF that serves in a new mode of collaborative biosynthesis with the PKS-NRPS poxE, by providing the olefin containing amino acid substrate via the synthesis of an ACP-bound dec-4-enoate. The cytochrome P450 monooxygenase poxM-catalyzed oxidation at the alpha-position creates the enzyme-bound 2-hydroxydec-4-enoyl-ACP thioester, which may be prone to spontaneous hydrolysis to yield 2-hydroxydec-4-enoic acid due to increased electrophilicity of the carbonyl. 2-hydroxydec-4-enoic acid can then be further oxidized by poxM to yield the alpha-ketoacid 2-oxodec-4-enoicacid, which is reductively aminated by the aminotransferase poxL to yield (S,E)-2-aminodec-4-enoic acid. The Hybrid PKS-NRPS synthetase poxE then performs condensation between the octaketide product of its PKS modules and the amino group of (S,E)-2-aminodec-4-enoic acid which is activated and incorporated by the adenylation domain. The resulting aminoacyl product can be cyclized by the Diels-Alderase PoxQ and reductively released by the reductive (R) domain of poxE to yield an aldehyde intermediate. The released aldehyde is then substrate for a Knoevenagel condensation by the hydrolyase poxO followed by an oxidation at the 5-position of the pyrrolidone ring. The presence of the olefin from the amino acid building block allows for migration of the substituted allyl group to occur. This allylic transposition reaction takes place in a conjugate addition, semipinacol-like fashion to yield a succinimide intermediate. Iterative two-electron oxidations of the C7 methyl of the succinimide intermediate to the carboxylic acid can be catalyzed by one of two remaining cytochrome P450 monooxygenasess poxC or poxD to yield oxaleimide A. Subsequent oxidation yields the maleimide scaffold oxaleimide I. Both oxaleimide A and oxaleimide I can undergo oxidative modifications in the decalin ring to yield the series of products oxaleimides B to H. The polypeptide is Hydrolyase poxO (Penicillium oxalicum).